A 486-amino-acid chain; its full sequence is UDP-N-acetylmuramate--L-alanine ligase (486 aa).

Residue 126 to 132 (GTHGKTT) participates in ATP binding.

The protein belongs to the MurCDEF family.

The protein resides in the cytoplasm. The enzyme catalyses UDP-N-acetyl-alpha-D-muramate + L-alanine + ATP = UDP-N-acetyl-alpha-D-muramoyl-L-alanine + ADP + phosphate + H(+). It participates in cell wall biogenesis; peptidoglycan biosynthesis. In terms of biological role, cell wall formation. The chain is UDP-N-acetylmuramate--L-alanine ligase from Pectobacterium atrosepticum (strain SCRI 1043 / ATCC BAA-672) (Erwinia carotovora subsp. atroseptica).